Here is a 279-residue protein sequence, read N- to C-terminus: Small ribosomal subunit protein uS9m (279 aa).

Belongs to the universal ribosomal protein uS9 family.

The protein resides in the mitochondrion. The protein is Small ribosomal subunit protein uS9m (MRPS9) of Eremothecium gossypii (strain ATCC 10895 / CBS 109.51 / FGSC 9923 / NRRL Y-1056) (Yeast).